A 570-amino-acid chain; its full sequence is MSTPQKTAGGNNAYHNFYNDFLHIKDPNERRRLALAEVDRAPFGWYHVRAVAVAGVGFFTDSYDIFTVSLLTLMLGIVYFPGEGKMPTTSDTAIKLATSAGTVIGQVGFGAAADVFGRKSMYGLELLFIIFATLAQALASGSPSINIIGIIIFWRVLMGVGIGGDYPLSSIITSEFATTKWRGAMMGAVFAMQGLGQLAAAFVMLFVTLGFKKSLEAAPTLASCTGDCAVAVDKMWRTVIGVGAVPGCIALYYRLTIPETPRYTFDVKRDVEQASDDIEAFKTGKPKGQPDEATRIVAKQEAEKEMEIPKASWGDFFRHYSKRKNAMLLAGTALSWCFLDIAYYGVSLNNATILNVIGYSTTGAKNTYEILYNTAVGNLIIVLAGAVPGYWVTVFTVDTVGRKPIQFMGFGILTILFVVMGFAYKHLSPHALLAIFVLAQFFFNFGPNATTFIVPGEVFPTRYRSTSHGLSAAMGKIGSIIGQGAIAPLRTRGAVKGGNPNPWMNHVLEIYALFMLLGVGTTFLIPETKRKTLEELSGEFDMSGEEEAQRDTTLTEHKTEAPTSSAAVNA.

Over 1–61 (MSTPQKTAGG…AVAGVGFFTD (61 aa)) the chain is Cytoplasmic. A helical transmembrane segment spans residues 62–82 (SYDIFTVSLLTLMLGIVYFPG). Over 83–95 (EGKMPTTSDTAIK) the chain is Extracellular. A helical membrane pass occupies residues 96–116 (LATSAGTVIGQVGFGAAADVF). Residues 117–120 (GRKS) are Cytoplasmic-facing. The chain crosses the membrane as a helical span at residues 121 to 141 (MYGLELLFIIFATLAQALASG). Topologically, residues 142 to 143 (SP) are extracellular. Residues 144–164 (SINIIGIIIFWRVLMGVGIGG) form a helical membrane-spanning segment. Residues 165 to 186 (DYPLSSIITSEFATTKWRGAMM) lie on the Cytoplasmic side of the membrane. Residues 187–207 (GAVFAMQGLGQLAAAFVMLFV) traverse the membrane as a helical segment. Topologically, residues 208–237 (TLGFKKSLEAAPTLASCTGDCAVAVDKMWR) are extracellular. A helical membrane pass occupies residues 238–258 (TVIGVGAVPGCIALYYRLTIP). Residues 259-325 (ETPRYTFDVK…FFRHYSKRKN (67 aa)) are Cytoplasmic-facing. Residues 326-346 (AMLLAGTALSWCFLDIAYYGV) traverse the membrane as a helical segment. The Extracellular portion of the chain corresponds to 347–374 (SLNNATILNVIGYSTTGAKNTYEILYNT). A helical transmembrane segment spans residues 375-395 (AVGNLIIVLAGAVPGYWVTVF). The Cytoplasmic segment spans residues 396–403 (TVDTVGRK). The chain crosses the membrane as a helical span at residues 404–424 (PIQFMGFGILTILFVVMGFAY). Topologically, residues 425–433 (KHLSPHALL) are extracellular. Residues 434 to 454 (AIFVLAQFFFNFGPNATTFIV) form a helical membrane-spanning segment. At 455 to 468 (PGEVFPTRYRSTSH) the chain is on the cytoplasmic side. The helical transmembrane segment at 469-489 (GLSAAMGKIGSIIGQGAIAPL) threads the bilayer. Residues 490–505 (RTRGAVKGGNPNPWMN) are Extracellular-facing. A helical membrane pass occupies residues 506–526 (HVLEIYALFMLLGVGTTFLIP). The Cytoplasmic portion of the chain corresponds to 527–570 (ETKRKTLEELSGEFDMSGEEEAQRDTTLTEHKTEAPTSSAAVNA). The span at 537 to 546 (SGEFDMSGEE) shows a compositional bias: acidic residues. The tract at residues 537 to 570 (SGEFDMSGEEEAQRDTTLTEHKTEAPTSSAAVNA) is disordered. The segment covering 547–560 (EAQRDTTLTEHKTE) has biased composition (basic and acidic residues). Positions 561–570 (APTSSAAVNA) are enriched in polar residues.

The protein belongs to the major facilitator superfamily. Sugar transporter (TC 2.A.1.1) family.

Its subcellular location is the cell membrane. Phosphate transport activity is competitively inhibited by arsenate. High-affinity transporter for external inorganic phosphate. Acts probably as a H(+)-phosphate symporter. This is Repressible high-affinity phosphate permease from Neurospora crassa (strain ATCC 24698 / 74-OR23-1A / CBS 708.71 / DSM 1257 / FGSC 987).